We begin with the raw amino-acid sequence, 364 residues long: Mannose-1-phosphate guanyltransferase (364 aa).

The protein belongs to the transferase hexapeptide repeat family.

Its subcellular location is the cytoplasm. The enzyme catalyses alpha-D-mannose 1-phosphate + GTP + H(+) = GDP-alpha-D-mannose + diphosphate. It functions in the pathway nucleotide-sugar biosynthesis; GDP-alpha-D-mannose biosynthesis; GDP-alpha-D-mannose from alpha-D-mannose 1-phosphate (GTP route): step 1/1. Its function is as follows. Involved in cell wall synthesis where it is required for glycosylation. Involved in cell cycle progression through cell-size checkpoint. In Aspergillus oryzae (strain ATCC 42149 / RIB 40) (Yellow koji mold), this protein is Mannose-1-phosphate guanyltransferase (mpg1).